Reading from the N-terminus, the 406-residue chain is Zinc finger protein 57 (406 aa).

The KRAB domain maps to 17–88 (VRYEDVAVSF…TCTGVFKGGP (72 aa)). Positions 57 to 77 (ESKKKPQEPNPNLKDKDDDKS) are disordered. The segment at 90-113 (FFCLTCGKCFKKNTFLFNHQFPVR) adopts a C2H2-type 1; degenerate zinc-finger fold. 2 consecutive C2H2-type zinc fingers follow at residues 140-162 (FFCN…RRAH) and 168-190 (RSCP…LKVH). Residues 194 to 226 (KPVAGSHVKVHQNKPVASNQKQKGRVPPTTRES) are disordered. The C2H2-type 4 zinc finger occupies 270–292 (VYCPYCRITFTMRTCLLNHLKIH). The C2H2-type 5; degenerate zinc-finger motif lies at 318–337 (YNCPVCDSSFRGKESLLNHL). Residues 372-406 (SRKRRRKRISSDSSETEGPSGSDEVMEVDTDSDLS) form a disordered region. Residues 395–406 (EVMEVDTDSDLS) are compositionally biased toward acidic residues.

This sequence belongs to the krueppel C2H2-type zinc-finger protein family. In terms of tissue distribution, expressed in oligodendrocytes and at lower levels in astrocytes.

It is found in the nucleus. Transcription regulator required to maintain maternal and paternal gene imprinting, a process by which gene expression is restricted in a parent of origin-specific manner by epigenetic modification of genomic DNA and chromatin, including DNA methylation. Acts by controlling DNA methylation during the earliest multicellular stages of development at multiple imprinting control regions (ICRs). Acts together with ZNF445. Required for the establishment of maternal methylation imprints at SNRPN locus. Acts as a transcriptional repressor in Schwann cells. Binds to a 5'-TGCCGC-3' consensus sequence and recognizes the methylated CpG within this element. The sequence is that of Zinc finger protein 57 (Zfp57) from Rattus norvegicus (Rat).